A 150-amino-acid polypeptide reads, in one-letter code: MNTCIQLLILCLVTVINSENSTDNSTENTIENEIENATETELSEAIENETENVTETELPETVETEIQTEAQNQPQIPKQKYCKSEGQYCSRTYFHRCCGNLVCQLHGFFNGTCVQCLAERKFCIWSSECCSRRCRLFRCRKNPYVQVIPY.

An N-terminal signal peptide occupies residues 1-18 (MNTCIQLLILCLVTVINS). N-linked (GlcNAc...) asparagine glycans are attached at residues Asn-20, Asn-24, Asn-36, Asn-48, Asn-52, and Asn-110. 3 disulfide bridges follow: Cys-116/Cys-130, Cys-123/Cys-134, and Cys-129/Cys-139.

It belongs to the UPF0506 family.

The protein resides in the secreted. In Schistosoma japonicum (Blood fluke), this protein is UPF0506 protein SJCHGC02380.